The primary structure comprises 149 residues: Endoribonuclease YbeY (149 aa).

Residues H106, H110, and H116 each coordinate Zn(2+).

The protein belongs to the endoribonuclease YbeY family. Zn(2+) serves as cofactor.

It is found in the cytoplasm. Its function is as follows. Single strand-specific metallo-endoribonuclease involved in late-stage 70S ribosome quality control and in maturation of the 3' terminus of the 16S rRNA. The sequence is that of Endoribonuclease YbeY from Methylobacillus flagellatus (strain ATCC 51484 / DSM 6875 / VKM B-1610 / KT).